The chain runs to 462 residues: MSEGVDLIDIYADEEFNQDSEFNNTDQIDLYDDVLTAASQPSDDRSSSTEPPPPVRQEPAPKPNNKTPAILYTYSGLRSRRAAVYVGSFSWWTTDQQLIQVIRSIGVYDVVELKFAENRANGQSKGYAEVVVASENSVHKLLELLPGKVLNGEKVDVRPATRQNLSQFEAQARKRIPPRAHSRDSSDSADGRATPSENLVPSSARVDKPPSVLPYFNRPPSALPLMGLPPPPIPPPPPLSSSFGVPPPPPGIHYQHLMPPPPRLPPHLAVPPPGAIPPALHLNPAFFPPPNATVGPPPDTYMKASTPYNHHGSRDSGPLPSTVSEAEFEEIMKRNRAISSSAISKAVSGASAGDYSDAIETLLTAIAVIKQSRVANDERCRVLISSLKDCLHGIEAKSYSVGASGSSSRKRHRSRERSPSRSRESSRRHRDLLHNEDRHDDYFQERNREHERHRDRERDRHH.

Disordered regions lie at residues 34–68 and 161–213; these read VLTA…NKTP and TRQN…PSVL. The span at 50-62 shows a compositional bias: pro residues; it reads EPPPPVRQEPAPK. The RRM domain occupies 82 to 162; that stretch reads AAVYVGSFSW…EKVDVRPATR (81 aa). The segment covering 181–190 has biased composition (basic and acidic residues); sequence HSRDSSDSAD. Thr194 bears the Phosphothreonine mark. Ser196 carries the post-translational modification Phosphoserine. A Glycyl lysine isopeptide (Lys-Gly) (interchain with G-Cter in SUMO2) cross-link involves residue Lys345. The segment at 400-462 is disordered; sequence SVGASGSSSR…HRDRERDRHH (63 aa). 2 positions are modified to phosphoserine: Ser404 and Ser414. Residues 409–460 are arg/Ser-rich domain; that stretch reads RKRHRSRERSPSRSRESSRRHRDLLHNEDRHDDYFQERNREHERHRDRERDR. Basic and acidic residues-rich tracts occupy residues 416–425 and 432–462; these read ERSPSRSRES and LLHN…DRHH.

The protein belongs to the RRM CPSF6/7 family. Component of the cleavage factor Im (CFIm) complex which is a heterotetramer composed of two subunits of NUDT21/CPSF5 and two subunits of CPSF6 or CPSF7 or a heterodimer of CPSF6 and CPSF7. The cleavage factor Im (CFIm) complex associates with the CPSF and CSTF complexes to promote the assembly of the core mRNA 3'-processing machinery. Interacts with NUDT21/CPSF5. Interacts (via Arg/Ser-rich domain) with FIP1L1 (preferentially via unphosphorylated form and Arg/Glu/Asp-rich region); this interaction mediates, at least in part, the interaction between the CFIm and CPSF complexes and may be inhibited by CPSF7 hyper-phosphorylation. Phosphorylated. In terms of processing, asymmetrically dimethylated on arginine residues by PRMT1.

The protein localises to the nucleus. The protein resides in the cytoplasm. Component of the cleavage factor Im (CFIm) complex that functions as an activator of the pre-mRNA 3'-end cleavage and polyadenylation processing required for the maturation of pre-mRNA into functional mRNAs. CFIm contributes to the recruitment of multiprotein complexes on specific sequences on the pre-mRNA 3'-end, so called cleavage and polyadenylation signals (pA signals). Most pre-mRNAs contain multiple pA signals, resulting in alternative cleavage and polyadenylation (APA) producing mRNAs with variable 3'-end formation. The CFIm complex acts as a key regulator of cleavage and polyadenylation site choice during APA through its binding to 5'-UGUA-3' elements localized in the 3'-untranslated region (UTR) for a huge number of pre-mRNAs. CPSF7 activates directly the mRNA 3'-processing machinery. Binds to pA signals in RNA substrates. In Rattus norvegicus (Rat), this protein is Cleavage and polyadenylation specificity factor subunit 7.